Here is a 444-residue protein sequence, read N- to C-terminus: 3-phosphoshikimate 1-carboxyvinyltransferase (444 aa).

The 3-phosphoshikimate site is built by Lys-29, Ser-30, and Arg-34. Lys-29 contributes to the phosphoenolpyruvate binding site. Residues Gly-102 and Arg-131 each contribute to the phosphoenolpyruvate site. The 3-phosphoshikimate site is built by Ser-176, Gln-178, Asp-326, and Lys-353. Gln-178 lines the phosphoenolpyruvate pocket. Residue Asp-326 is the Proton acceptor of the active site. Phosphoenolpyruvate contacts are provided by Arg-357 and Arg-399.

It belongs to the EPSP synthase family. As to quaternary structure, monomer.

Its subcellular location is the cytoplasm. The enzyme catalyses 3-phosphoshikimate + phosphoenolpyruvate = 5-O-(1-carboxyvinyl)-3-phosphoshikimate + phosphate. The protein operates within metabolic intermediate biosynthesis; chorismate biosynthesis; chorismate from D-erythrose 4-phosphate and phosphoenolpyruvate: step 6/7. Catalyzes the transfer of the enolpyruvyl moiety of phosphoenolpyruvate (PEP) to the 5-hydroxyl of shikimate-3-phosphate (S3P) to produce enolpyruvyl shikimate-3-phosphate and inorganic phosphate. The sequence is that of 3-phosphoshikimate 1-carboxyvinyltransferase from Synechococcus sp. (strain JA-3-3Ab) (Cyanobacteria bacterium Yellowstone A-Prime).